The primary structure comprises 653 residues: Beta-galactosidase-1-like protein 3 (653 aa).

Residue Glu227 is the Proton donor of the active site. The Nucleophile role is filled by Glu301.

It belongs to the glycosyl hydrolase 35 family.

In Homo sapiens (Human), this protein is Beta-galactosidase-1-like protein 3 (GLB1L3).